The following is a 28-amino-acid chain: Small spore coat assembly protein A (28 aa).

Residues 8 to 28 traverse the membrane as a helical segment; that stretch reads GFALLVVLFILLIIVGAAYIY.

Belongs to the SscA family.

It localises to the spore coat. It is found in the membrane. In terms of biological role, spore protein involved in the assembly of several components of the spore coat, including CotB, CotG and CotH, and in spore germination. The protein is Small spore coat assembly protein A of Bacillus subtilis (strain 168).